We begin with the raw amino-acid sequence, 159 residues long: Cell number regulator 4 (159 aa).

A helical transmembrane segment spans residues 52–74 (LAGLLYCLLLHAGVAVVPCHCIY).

The protein belongs to the cornifelin family. In terms of tissue distribution, expressed in roots, coleoptiles, leaves, stalks, apical meristems, immature ears, endosperm, pericarp and tassel spikelets.

The protein resides in the membrane. This is Cell number regulator 4 (CNR4) from Zea mays (Maize).